The following is a 253-amino-acid chain: Claudin domain-containing protein 1 (253 aa).

A helical membrane pass occupies residues 5 to 25 (FATAFVIACVLSLISTIYMAA). Residues Asn-42 and Asn-72 are each glycosylated (N-linked (GlcNAc...) asparagine). 3 helical membrane-spanning segments follow: residues 141 to 161 (FLLP…GLCA), 175 to 195 (ILHL…VAGI), and 216 to 236 (FCLA…FIWA).

The protein belongs to the PMP-22/EMP/MP20 family.

The protein resides in the cell junction. It is found in the tight junction. Its subcellular location is the cell membrane. Functionally, plays a role in negatively regulating the permeability of cells to small molecules. This Macaca fascicularis (Crab-eating macaque) protein is Claudin domain-containing protein 1 (CLDND1).